The following is a 482-amino-acid chain: Thymidine phosphorylase (482 aa).

A propeptide spanning residues 1–10 (MAALMTPGTG) is cleaved from the precursor. The disordered stretch occupies residues 1–36 (MAALMTPGTGAPPAPGDFSGEGSQGLPDPSPEPKQL). Threonine 6 is modified (phosphothreonine). Positions 116, 202, 217, and 221 each coordinate substrate. R-V-A-A-A-L-X(5,6)-L-G-R repeat units follow at residues 265-279 (RVAAALTAMDKPLGR) and 329-342 (RVAAALDDGSALGR). R-A-L-X-X-A-L-V-L repeat units lie at residues 393-401 (RALPLALVL) and 453-461 (RALQEALVL).

This sequence belongs to the thymidine/pyrimidine-nucleoside phosphorylase family. As to quaternary structure, homodimer.

It catalyses the reaction thymidine + phosphate = 2-deoxy-alpha-D-ribose 1-phosphate + thymine. It participates in pyrimidine metabolism; dTMP biosynthesis via salvage pathway; dTMP from thymine: step 1/2. May have a role in maintaining the integrity of the blood vessels. Has growth promoting activity on endothelial cells, angiogenic activity in vivo and chemotactic activity on endothelial cells in vitro. In terms of biological role, catalyzes the reversible phosphorolysis of thymidine. The produced molecules are then utilized as carbon and energy sources or in the rescue of pyrimidine bases for nucleotide synthesis. The sequence is that of Thymidine phosphorylase from Homo sapiens (Human).